Here is a 358-residue protein sequence, read N- to C-terminus: UDP-N-acetylglucosamine--N-acetylmuramyl-(pentapeptide) pyrophosphoryl-undecaprenol N-acetylglucosamine transferase (358 aa).

Arg166, Ser196, and Gln291 together coordinate UDP-N-acetyl-alpha-D-glucosamine.

Belongs to the glycosyltransferase 28 family. MurG subfamily.

It localises to the cell membrane. It carries out the reaction Mur2Ac(oyl-L-Ala-gamma-D-Glu-L-Lys-D-Ala-D-Ala)-di-trans,octa-cis-undecaprenyl diphosphate + UDP-N-acetyl-alpha-D-glucosamine = beta-D-GlcNAc-(1-&gt;4)-Mur2Ac(oyl-L-Ala-gamma-D-Glu-L-Lys-D-Ala-D-Ala)-di-trans,octa-cis-undecaprenyl diphosphate + UDP + H(+). Its pathway is cell wall biogenesis; peptidoglycan biosynthesis. Functionally, cell wall formation. Catalyzes the transfer of a GlcNAc subunit on undecaprenyl-pyrophosphoryl-MurNAc-pentapeptide (lipid intermediate I) to form undecaprenyl-pyrophosphoryl-MurNAc-(pentapeptide)GlcNAc (lipid intermediate II). This is UDP-N-acetylglucosamine--N-acetylmuramyl-(pentapeptide) pyrophosphoryl-undecaprenol N-acetylglucosamine transferase from Staphylococcus saprophyticus subsp. saprophyticus (strain ATCC 15305 / DSM 20229 / NCIMB 8711 / NCTC 7292 / S-41).